Reading from the N-terminus, the 290-residue chain is Fructose-1,6-bisphosphatase class 1 (290 aa).

4 residues coordinate Mg(2+): E78, D96, L98, and D99. Substrate-binding positions include D99 to S102, Y201, and K226. E232 contacts Mg(2+).

This sequence belongs to the FBPase class 1 family. As to quaternary structure, homotetramer. Requires Mg(2+) as cofactor.

Its subcellular location is the cytoplasm. The catalysed reaction is beta-D-fructose 1,6-bisphosphate + H2O = beta-D-fructose 6-phosphate + phosphate. The protein operates within carbohydrate biosynthesis; gluconeogenesis. The chain is Fructose-1,6-bisphosphatase class 1 from Helicobacter pylori (strain HPAG1).